A 41-amino-acid polypeptide reads, in one-letter code: uncharacterized protein (41 aa).

Residues 1-12 (MTRNVVRQEFEA) show a composition bias toward basic and acidic residues. The tract at residues 1 to 23 (MTRNVVRQEFEAPGKPQDSSQQD) is disordered.

This is an uncharacterized protein from Homo sapiens (Human).